The chain runs to 173 residues: Transcription factor E (173 aa).

The region spanning Ala9 to Tyr92 is the HTH TFE/IIEalpha-type domain.

Belongs to the TFE family. As to quaternary structure, monomer. Interaction with RNA polymerase subunits RpoF and RpoE is necessary for Tfe stimulatory transcription activity. Able to interact with Tbp and RNA polymerase in the absence of DNA promoter. Interacts both with the preinitiation and elongation complexes.

Functionally, transcription factor that plays a role in the activation of archaeal genes transcribed by RNA polymerase. Facilitates transcription initiation by enhancing TATA-box recognition by TATA-box-binding protein (Tbp), and transcription factor B (Tfb) and RNA polymerase recruitment. Not absolutely required for transcription in vitro, but particularly important in cases where Tbp or Tfb function is not optimal. It dynamically alters the nucleic acid-binding properties of RNA polymerases by stabilizing the initiation complex and destabilizing elongation complexes. Seems to translocate with the RNA polymerase following initiation and acts by binding to the non template strand of the transcription bubble in elongation complexes. The polypeptide is Transcription factor E (Methanospirillum hungatei JF-1 (strain ATCC 27890 / DSM 864 / NBRC 100397 / JF-1)).